We begin with the raw amino-acid sequence, 194 residues long: Imidazoleglycerol-phosphate dehydratase (194 aa).

This sequence belongs to the imidazoleglycerol-phosphate dehydratase family.

The protein resides in the cytoplasm. The enzyme catalyses D-erythro-1-(imidazol-4-yl)glycerol 3-phosphate = 3-(imidazol-4-yl)-2-oxopropyl phosphate + H2O. It participates in amino-acid biosynthesis; L-histidine biosynthesis; L-histidine from 5-phospho-alpha-D-ribose 1-diphosphate: step 6/9. The chain is Imidazoleglycerol-phosphate dehydratase from Streptococcus mutans serotype c (strain ATCC 700610 / UA159).